The chain runs to 404 residues: MEEKGEISPSGVVTVKGDEALVPRTEFQQNPSFLQFVSPTTVVTPLPPPPAPSSAPVPTTVTPGSATASTGSDPTKKKRGRPRKYAPDGSLNPRFLRPTLSPTPISSSIPLSGDYQWKRGKAQQQHQPLEFVKKSHKFEYGSPAPTPPLPGLSCYVGANFTTHQFTVNGGEDVTMKVMPYSQQGSRAICILSATGSISNVTLGQPTNAGGTLTYEGRFEILSLSGSFMPTENGGTKGRAGGMSISLAGPNGNIFGGGLAGMLIAAGPVQVVMGSFIVMHQAEQNQKKKPRVMEAFAPPQPQAPPQLQQQQPPTFTITTVNSTSPSVNTVEEQKPQAYGGGIVRPMAQMPSSFQNDNSTMNNFTPAYHGYGNMNTGTTHKEEHEDEDGGDDDDDSGDTRSQSHSG.

Positions 40-112 are disordered; that stretch reads TTVVTPLPPP…TPISSSIPLS (73 aa). Over residues 45 to 55 the composition is skewed to pro residues; the sequence is PLPPPPAPSSA. Low complexity predominate over residues 56-70; that stretch reads PVPTTVTPGSATAST. Positions 76 to 84 match the Bipartite nuclear localization signal motif; the sequence is KKKRGRPRK. Residues 76-88 constitute a DNA-binding region (a.T hook); that stretch reads KKKRGRPRKYAPD. Positions 98 to 112 are enriched in low complexity; the sequence is PTLSPTPISSSIPLS. The region spanning 157–299 is the PPC domain; that stretch reads GANFTTHQFT…RVMEAFAPPQ (143 aa). The disordered stretch occupies residues 365 to 404; sequence AYHGYGNMNTGTTHKEEHEDEDGGDDDDDSGDTRSQSHSG. Acidic residues predominate over residues 382-394; sequence HEDEDGGDDDDDS.

Its subcellular location is the nucleus. In terms of biological role, transcription factor that specifically binds AT-rich DNA sequences related to the nuclear matrix attachment regions (MARs). In Arabidopsis thaliana (Mouse-ear cress), this protein is AT-hook motif nuclear-localized protein 6.